The primary structure comprises 218 residues: Ribosomal RNA large subunit methyltransferase E (218 aa).

Gly64, Trp66, Asp92, Asp108, and Asp133 together coordinate S-adenosyl-L-methionine. The Proton acceptor role is filled by Lys173.

This sequence belongs to the class I-like SAM-binding methyltransferase superfamily. RNA methyltransferase RlmE family.

Its subcellular location is the cytoplasm. It carries out the reaction uridine(2552) in 23S rRNA + S-adenosyl-L-methionine = 2'-O-methyluridine(2552) in 23S rRNA + S-adenosyl-L-homocysteine + H(+). Functionally, specifically methylates the uridine in position 2552 of 23S rRNA at the 2'-O position of the ribose in the fully assembled 50S ribosomal subunit. This chain is Ribosomal RNA large subunit methyltransferase E, found in Paracidovorax citrulli (strain AAC00-1) (Acidovorax citrulli).